The chain runs to 227 residues: 2-phospho-L-lactate guanylyltransferase (227 aa).

The protein belongs to the CofC family. In terms of assembly, homodimer.

The catalysed reaction is (2S)-2-phospholactate + GTP + H(+) = (2S)-lactyl-2-diphospho-5'-guanosine + diphosphate. It functions in the pathway cofactor biosynthesis; coenzyme F420 biosynthesis. In terms of biological role, guanylyltransferase that catalyzes the activation of (2S)-2-phospholactate (2-PL) as (2S)-lactyl-2-diphospho-5'-guanosine, via the condensation of 2-PL with GTP. It is involved in the biosynthesis of coenzyme F420, a hydride carrier cofactor. The sequence is that of 2-phospho-L-lactate guanylyltransferase from Methanocaldococcus sp. (strain FS406-22).